The chain runs to 549 residues: Glucose-6-phosphate isomerase (549 aa).

Glu355 acts as the Proton donor in catalysis. Residues His386 and Lys514 contribute to the active site.

Belongs to the GPI family.

It localises to the cytoplasm. The enzyme catalyses alpha-D-glucose 6-phosphate = beta-D-fructose 6-phosphate. Its pathway is carbohydrate biosynthesis; gluconeogenesis. It participates in carbohydrate degradation; glycolysis; D-glyceraldehyde 3-phosphate and glycerone phosphate from D-glucose: step 2/4. Functionally, catalyzes the reversible isomerization of glucose-6-phosphate to fructose-6-phosphate. The chain is Glucose-6-phosphate isomerase from Buchnera aphidicola subsp. Acyrthosiphon pisum (strain 5A).